The chain runs to 381 residues: GDP-mannose transporter (381 aa).

Residues 1 to 12 (MSDDKKSDDYRV) are compositionally biased toward basic and acidic residues. The interval 1-28 (MSDDKKSDDYRVDMPSSRTSRAPSPIMR) is disordered. The Cytoplasmic portion of the chain corresponds to 1–36 (MSDDKKSDDYRVDMPSSRTSRAPSPIMRPALKSAPS). A helical transmembrane segment spans residues 37–57 (LTENPMAAVLAYCASSILMTV). At 58-67 (TNKYVLSGVD) the chain is on the lumenal side. Residues 68–88 (FNLNFFLLCVQSVVCVTAISI) form a helical membrane-spanning segment. Topologically, residues 89–107 (CKAAGLITYRDFNTDEAKK) are cytoplasmic. The helical transmembrane segment at 108 to 126 (WFPISLLLIGMIYTGTWAL) threads the bilayer. Topologically, residues 127 to 130 (KYLS) are lumenal. The chain crosses the membrane as a helical span at residues 131–153 (IPVYTIFKNLTIILIAYGEVLWF). Over 154–161 (GGSVTPMT) the chain is Cytoplasmic. Residues 162–184 (LFSFGLMVLSSIIAAWADIQHAL) form a helical membrane-spanning segment. The Lumenal segment spans residues 185–199 (NSFGQQSEAANEALS). The chain crosses the membrane as a helical span at residues 200 to 220 (TMHAGYLWMAFNCVCSATYLL). Over 221 to 242 (SMRKRIKLTNFKDYDTMYYNNL) the chain is Cytoplasmic. A helical transmembrane segment spans residues 243 to 263 (LTIPILLVASILVEDWSSANI). At 264–274 (QKNFPPEQRNT) the chain is on the lumenal side. The helical transmembrane segment at 275–295 (VIMVMVISGMSTVFISYTSAW) threads the bilayer. Topologically, residues 296 to 303 (AVRVTSST) are cytoplasmic. A helical membrane pass occupies residues 304 to 324 (TYSMVGALNKLPIAISGLVFF). The Lumenal portion of the chain corresponds to 325–327 (DAP). A helical transmembrane segment spans residues 328–348 (VTFGSVSAIFVGFVSGIVYAV). Topologically, residues 349–381 (AKVRQNSKPKTVLPTTNIPLSASSRSMQDSLKA) are cytoplasmic.

Belongs to the TPT transporter family. SLC35D subfamily. As to quaternary structure, homooligomer.

Its subcellular location is the golgi apparatus membrane. It is found in the cytoplasmic vesicle membrane. The protein resides in the endoplasmic reticulum membrane. In terms of biological role, involved in the import of GDP-mannose from the cytoplasm into the Golgi lumen. The sequence is that of GDP-mannose transporter (VRG4) from Phaeosphaeria nodorum (strain SN15 / ATCC MYA-4574 / FGSC 10173) (Glume blotch fungus).